The following is a 487-amino-acid chain: uncharacterized protein (487 aa).

Disordered stretches follow at residues 35–153 (VSRK…SGDQ), 237–345 (NTTK…AKAL), and 358–395 (QKRKREEIVRKKEERRHAPVSEKKEVPTTVSTNTSSAA). A compositionally biased stretch (acidic residues) spans 54–96 (FDQEDILDTVPEQTDENEDEAGDDELESEKEELDYDEEEDDED). Residues 97-132 (RRERTSRYTSEKKGSRKDSVEGDENKKENGQDETKR) are compositionally biased toward basic and acidic residues. Residues 241 to 253 (SKSRGRDTRKRRS) show a composition bias toward basic residues. The segment covering 254-264 (SSYSSTSSSSD) has biased composition (low complexity). Composition is skewed to basic and acidic residues over residues 273-338 (SRSD…KHSA) and 358-383 (QKRKREEIVRKKEERRHAPVSEKKEV). The segment covering 385–395 (TTVSTNTSSAA) has biased composition (low complexity).

This is an uncharacterized protein from Caenorhabditis elegans.